The following is a 99-amino-acid chain: Aspartyl/glutamyl-tRNA(Asn/Gln) amidotransferase subunit C (99 aa).

This sequence belongs to the GatC family. As to quaternary structure, heterotrimer of A, B and C subunits.

It carries out the reaction L-glutamyl-tRNA(Gln) + L-glutamine + ATP + H2O = L-glutaminyl-tRNA(Gln) + L-glutamate + ADP + phosphate + H(+). The catalysed reaction is L-aspartyl-tRNA(Asn) + L-glutamine + ATP + H2O = L-asparaginyl-tRNA(Asn) + L-glutamate + ADP + phosphate + 2 H(+). Its function is as follows. Allows the formation of correctly charged Asn-tRNA(Asn) or Gln-tRNA(Gln) through the transamidation of misacylated Asp-tRNA(Asn) or Glu-tRNA(Gln) in organisms which lack either or both of asparaginyl-tRNA or glutaminyl-tRNA synthetases. The reaction takes place in the presence of glutamine and ATP through an activated phospho-Asp-tRNA(Asn) or phospho-Glu-tRNA(Gln). The protein is Aspartyl/glutamyl-tRNA(Asn/Gln) amidotransferase subunit C of Burkholderia mallei (strain NCTC 10247).